Here is a 344-residue protein sequence, read N- to C-terminus: MASRQDRREARAEADARRAAEEIARARDERVMQAEVDARSAADEIARARADRGAATMGADTAHHAAGGGGILESVQEGAKSFVSAVGRTFGGARDTAAEKTSQTADATRDKLGEYKDYTADKARETNDSVARKTNETADASRDKLGEYKDYTADKTRETKDAVAQKASDASEATKNKLGEYKDALARKTRDAKDTTAQKATEFKDGVKATAQETRDATADTARKAKDATKDTTQTAADKARETAATHDDATDKGQGQGLLGALGNVTGAIKEKLTVSPAATQEHLGGGEERAVKERAAEKAASVYFEEKDRLTRERAAERVDKCVEKCVEGCPDATCAHRHGKM.

Disordered regions lie at residues 1–20 and 116–258; these read MASR…RRAA and KDYT…QGQG. Residues 3–52 are a coiled coil; sequence SRQDRREARAEADARRAAEEIARARDERVMQAEVDARSAADEIARARADR. Basic and acidic residues-rich tracts occupy residues 116-163, 172-230, and 238-252; these read KDYT…KDAV, EATK…DATK, and DKAR…DATD.

This sequence belongs to the LEA type 4 family. Expressed in embryos.

Its subcellular location is the nucleus. Its function is as follows. Involved in abiotic stress responses. May function as chaperone and contribute to prevent the formation of damaging protein aggregates. In Oryza sativa subsp. japonica (Rice), this protein is Late embryogenesis abundant protein 17.